A 498-amino-acid chain; its full sequence is Glycylpeptide N-tetradecanoyltransferase 2 (498 aa).

A disordered region spans residues 1 to 88 (MAEDSESAAS…QPSKNPSVPM (88 aa)). Acidic residues predominate over residues 15–32 (ELDDQDTCGIDGDNEEET). Position 38 is a phosphoserine (serine 38). Positions 45–57 (AKKKKKKQKRKKE) are enriched in basic residues. Residues 61 to 86 (SGGTKSDSASDSQEIKIQQPSKNPSV) are compositionally biased toward polar residues. Tetradecanoyl-CoA is bound by residues histidine 117, tryptophan 122, leucine 250, valine 252, serine 258, arginine 260, valine 261, and alanine 262.

The protein belongs to the NMT family.

It localises to the cytoplasm. The protein resides in the membrane. The enzyme catalyses N-terminal glycyl-[protein] + tetradecanoyl-CoA = N-tetradecanoylglycyl-[protein] + CoA + H(+). The catalysed reaction is N-terminal glycyl-L-lysyl-[protein] + tetradecanoyl-CoA = N-terminal glycyl-(N(6)-tetradecanoyl)-L-lysyl-[protein] + CoA + H(+). Adds a myristoyl group to the N-terminal glycine residue of certain cellular and viral proteins. Also able to mediate N-terminal lysine myristoylation of proteins: catalyzes myristoylation of ARF6 on both 'Gly-2' and 'Lys-3'. Lysine myristoylation is required to maintain ARF6 on membranes during the GTPase cycle. The protein is Glycylpeptide N-tetradecanoyltransferase 2 of Homo sapiens (Human).